The following is a 407-amino-acid chain: Phosphopentomutase (407 aa).

Residues D10, D306, H311, D347, H348, and H359 each coordinate Mn(2+).

This sequence belongs to the phosphopentomutase family. Mn(2+) is required as a cofactor.

The protein localises to the cytoplasm. The enzyme catalyses 2-deoxy-alpha-D-ribose 1-phosphate = 2-deoxy-D-ribose 5-phosphate. It catalyses the reaction alpha-D-ribose 1-phosphate = D-ribose 5-phosphate. It functions in the pathway carbohydrate degradation; 2-deoxy-D-ribose 1-phosphate degradation; D-glyceraldehyde 3-phosphate and acetaldehyde from 2-deoxy-alpha-D-ribose 1-phosphate: step 1/2. Isomerase that catalyzes the conversion of deoxy-ribose 1-phosphate (dRib-1-P) and ribose 1-phosphate (Rib-1-P) to deoxy-ribose 5-phosphate (dRib-5-P) and ribose 5-phosphate (Rib-5-P), respectively. This Salmonella dublin (strain CT_02021853) protein is Phosphopentomutase.